The primary structure comprises 237 residues: Ribosomal RNA small subunit methyltransferase G (237 aa).

Residues Gly-78, Phe-83, 129–130 (AE), and Arg-148 contribute to the S-adenosyl-L-methionine site.

The protein belongs to the methyltransferase superfamily. RNA methyltransferase RsmG family.

Its subcellular location is the cytoplasm. Specifically methylates the N7 position of a guanine in 16S rRNA. This Streptococcus pyogenes serotype M12 (strain MGAS2096) protein is Ribosomal RNA small subunit methyltransferase G.